The chain runs to 619 residues: UvrABC system protein C (619 aa).

Residues 20-98 form the GIY-YIG domain; the sequence is TAPGVYRMYA…IKSLSPRYNV (79 aa). The UVR domain maps to 207-242; sequence DQLGEEIMHSMQQASEALEFERAARLRDLLSSLRSM.

Belongs to the UvrC family. In terms of assembly, interacts with UvrB in an incision complex.

It localises to the cytoplasm. Functionally, the UvrABC repair system catalyzes the recognition and processing of DNA lesions. UvrC both incises the 5' and 3' sides of the lesion. The N-terminal half is responsible for the 3' incision and the C-terminal half is responsible for the 5' incision. This Xanthomonas euvesicatoria pv. vesicatoria (strain 85-10) (Xanthomonas campestris pv. vesicatoria) protein is UvrABC system protein C.